The primary structure comprises 1531 residues: Myosin-17 (1531 aa).

A Myosin N-terminal SH3-like domain is found at 8–57 (IVGSHVWIEDPGAAWIDGEVVKINGEEVHAHTTNGKTVVANIANVFPKDT). In terms of domain architecture, Myosin motor spans 62-732 (GGVDDMTKLS…QMAELDARRA (671 aa)). ATP-binding positions include 156–163 (GESGAGKT) and 209–217 (NNNSSRFGK). 4 actin-binding regions span residues 495 to 529 (LIEK…YQTF), 531 to 554 (NYKR…AGEV), 589 to 613 (FPRL…KLQL), and 613 to 635 (LQSL…KPNN). IQ domains follow at residues 758–787 (LRGA…QAAA), 783–812 (RQAA…STIT), 806–835 (IRHS…MKAA), 831–860 (QMKA…AALS), and 854–883 (LQKA…AARD). A coiled-coil region spans residues 884–1056 (TGALREAKDK…VLRQQALAIS (173 aa)). The segment at 1071 to 1090 (LPRTPENGNYLNGGTKTTPD) is disordered. The span at 1076 to 1090 (ENGNYLNGGTKTTPD) shows a compositional bias: polar residues. The Dilute domain occupies 1159-1470 (DRIIQTIATA…IANMRVMMTE (312 aa)). Ser1517 is subject to Phosphoserine.

This sequence belongs to the TRAFAC class myosin-kinesin ATPase superfamily. Myosin family. Plant myosin class XI subfamily. As to quaternary structure, homodimer. Interacts with MYOB1, MYOB2 and MYOB3. Interacts with PHOX1 and PHOX2. In terms of tissue distribution, expressed ubiquitously.

The protein localises to the cytoplasm. Functionally, myosin heavy chain that is required for the cell cycle-regulated transport of various organelles and proteins for their segregation. Functions by binding with its tail domain to receptor proteins on organelles and exerting force with its N-terminal motor domain against actin filaments, thereby transporting its cargo along polarized actin cables. Involved in the tip growth of root hair cells and in the elongation of trichome stalk and branches. Plays a major role in trafficking of Golgi stacks, mitochondria and peroxisomes during root hair development. Acts as the primary contributor to ER streaming with a major role in the movement of Golgi bodies. Required for development of pavement cells, trichomes, and stigmatic papillae. Together with XI-F, required for the regulation of organ bending, such as gravitropic root bending. In Arabidopsis thaliana (Mouse-ear cress), this protein is Myosin-17.